Consider the following 345-residue polypeptide: Arginine N-succinyltransferase (345 aa).

Residue Leu-125 participates in succinyl-CoA binding. The active-site Proton donor is the His-229.

This sequence belongs to the arginine N-succinyltransferase family.

The enzyme catalyses succinyl-CoA + L-arginine = N(2)-succinyl-L-arginine + CoA + H(+). It functions in the pathway amino-acid degradation; L-arginine degradation via AST pathway; L-glutamate and succinate from L-arginine: step 1/5. Functionally, catalyzes the transfer of succinyl-CoA to arginine to produce N(2)-succinylarginine. The sequence is that of Arginine N-succinyltransferase from Yersinia enterocolitica serotype O:8 / biotype 1B (strain NCTC 13174 / 8081).